Reading from the N-terminus, the 211-residue chain is FMN-dependent NADH:quinone oxidoreductase 2 (211 aa).

102–105 (MWNF) is a binding site for FMN.

It belongs to the azoreductase type 1 family. In terms of assembly, homodimer. Requires FMN as cofactor.

The enzyme catalyses 2 a quinone + NADH + H(+) = 2 a 1,4-benzosemiquinone + NAD(+). It catalyses the reaction N,N-dimethyl-1,4-phenylenediamine + anthranilate + 2 NAD(+) = 2-(4-dimethylaminophenyl)diazenylbenzoate + 2 NADH + 2 H(+). Quinone reductase that provides resistance to thiol-specific stress caused by electrophilic quinones. Functionally, also exhibits azoreductase activity. Catalyzes the reductive cleavage of the azo bond in aromatic azo compounds to the corresponding amines. The sequence is that of FMN-dependent NADH:quinone oxidoreductase 2 from Bacillus cereus (strain ATCC 14579 / DSM 31 / CCUG 7414 / JCM 2152 / NBRC 15305 / NCIMB 9373 / NCTC 2599 / NRRL B-3711).